Consider the following 859-residue polypeptide: MQEQYNPSEIEALVQKHWHDNKTFEVTEDANKEKFYCLSMFPYPSGRLHMGHVRNYTIGDVVARFQRLQGKNVLQPIGWDSFGLPAENAAINNKTAPAPWTYENIEYMKNQLKLLGFGYDWSREIATCTPEYYRWEQWFFTKLYEKGLVYKKTASVNWCPNDETVLANEQVQDGCCWRCDTPVEQKEIPQWFIKITAYAEELLNDIDTLDGWPDQVKTMQRNWIGRSEGVEMTFGVAGHDKSFDIYTTRPDTLMGVTYVAIAAGHPLAEIAAHTNPELAAFIDECKNSTTSEAELATMEKRGVATGLFAIHPITGKQVPIWAANFVLMNYGTGAVMSVPGHDQRDFEFAKKYGLAIEAVIKPVDGDVDISEAAYTEKGVLFNSGEFDGLDFEAGFNAIANKLVAEGKGKRQVNYRLRDWGVSRQRYWGAPIPMVTLADGTVIPTPADQLPVLLPEDVVMDGIQSPIKADKEWAKTQVNGQDALRETDTFDTFMESSWYYARYCSPHADEMLDPAKANYWLPVDQYIGGIEHACMHLLYFRFFHKLLRDAGLVNSNEPAKQLLTQGMVLADAFYYINEKGARVWVSPLDVATTEKDDKGRITKAIDKDGNELVYTGMSKMSKSKNNGIDPQVMVEKYGADTVRLFMMFASPPELTLEWQESGVEGAHRFIKRLWKLANEHVNQDNSEALDVSTLTSDQKALRREVHKTIAKVTDDIGRRQMFNTAVAAVMELMNHLQKAPQTTGQDNAIIGEALSAIVRLLYPIIPHVSFNLWNELGNASNIEDSQWPVVDEAALVEDSKLIVVQVNGKVRAKITVAADADKESVEALGMIDEHVIKYLDGLTVRKVIYVPGKLLSIVAN.

The 'HIGH' region motif lies at 42 to 52; that stretch reads PYPSGRLHMGH. A 'KMSKS' region motif is present at residues 618–622; the sequence is KMSKS. An ATP-binding site is contributed by Lys621.

This sequence belongs to the class-I aminoacyl-tRNA synthetase family.

The protein localises to the cytoplasm. The catalysed reaction is tRNA(Leu) + L-leucine + ATP = L-leucyl-tRNA(Leu) + AMP + diphosphate. This is Leucine--tRNA ligase from Shewanella baltica (strain OS223).